The chain runs to 249 residues: Ribosomal RNA small subunit methyltransferase G (249 aa).

Residues G88, F93, 111–113 (DAT), 139–140 (AE), and R158 each bind S-adenosyl-L-methionine.

The protein belongs to the methyltransferase superfamily. RNA methyltransferase RsmG family.

The protein resides in the cytoplasm. Specifically methylates the N7 position of a guanine in 16S rRNA. This is Ribosomal RNA small subunit methyltransferase G from Thermus thermophilus (strain ATCC BAA-163 / DSM 7039 / HB27).